The following is a 495-amino-acid chain: Probable cytosol aminopeptidase (495 aa).

Residues Lys-261 and Asp-266 each coordinate Mn(2+). Lys-273 is a catalytic residue. Residues Asp-284, Asp-343, and Glu-345 each coordinate Mn(2+). The active site involves Arg-347.

Belongs to the peptidase M17 family. Mn(2+) serves as cofactor.

It is found in the cytoplasm. The catalysed reaction is Release of an N-terminal amino acid, Xaa-|-Yaa-, in which Xaa is preferably Leu, but may be other amino acids including Pro although not Arg or Lys, and Yaa may be Pro. Amino acid amides and methyl esters are also readily hydrolyzed, but rates on arylamides are exceedingly low.. The enzyme catalyses Release of an N-terminal amino acid, preferentially leucine, but not glutamic or aspartic acids.. Its function is as follows. Presumably involved in the processing and regular turnover of intracellular proteins. Catalyzes the removal of unsubstituted N-terminal amino acids from various peptides. This chain is Probable cytosol aminopeptidase, found in Chelativorans sp. (strain BNC1).